The chain runs to 156 residues: Small ribosomal subunit protein uS7 (156 aa).

This sequence belongs to the universal ribosomal protein uS7 family. As to quaternary structure, part of the 30S ribosomal subunit. Contacts proteins S9 and S11.

Functionally, one of the primary rRNA binding proteins, it binds directly to 16S rRNA where it nucleates assembly of the head domain of the 30S subunit. Is located at the subunit interface close to the decoding center, probably blocks exit of the E-site tRNA. The chain is Small ribosomal subunit protein uS7 from Streptomyces avermitilis (strain ATCC 31267 / DSM 46492 / JCM 5070 / NBRC 14893 / NCIMB 12804 / NRRL 8165 / MA-4680).